The chain runs to 370 residues: 3-dehydroquinate synthase (370 aa).

NAD(+) contacts are provided by residues 112-116 (GVIGD), 136-137 (TT), Lys-149, Lys-158, and 176-179 (TLAT). The Zn(2+) site is built by Glu-191, His-254, and His-276.

Belongs to the sugar phosphate cyclases superfamily. Dehydroquinate synthase family. Requires Co(2+) as cofactor. Zn(2+) is required as a cofactor. The cofactor is NAD(+).

It localises to the cytoplasm. The enzyme catalyses 7-phospho-2-dehydro-3-deoxy-D-arabino-heptonate = 3-dehydroquinate + phosphate. It participates in metabolic intermediate biosynthesis; chorismate biosynthesis; chorismate from D-erythrose 4-phosphate and phosphoenolpyruvate: step 2/7. Catalyzes the conversion of 3-deoxy-D-arabino-heptulosonate 7-phosphate (DAHP) to dehydroquinate (DHQ). The polypeptide is 3-dehydroquinate synthase (Xylella fastidiosa (strain M12)).